Reading from the N-terminus, the 1162-residue chain is Leptin receptor (1162 aa).

An N-terminal signal peptide occupies residues 1–21 (MTCQKFYVVLLHWEFLYVITA). Over 22–839 (LNLAYPTSPW…DIAKQQNDAG (818 aa)) the chain is Extracellular. Disulfide bonds link C37-C90, C89-C99, C131-C142, C186-C195, and C188-C193. N-linked (GlcNAc...) asparagine glycans are attached at residues N55, N56, N73, and N98. N-linked (GlcNAc...) asparagine glycosylation occurs at N187. The region spanning 238-331 (PPLGLRMEVT…LPQLFTTQDV (94 aa)) is the Fibronectin type-III 1 domain. N275, N345, and N356 each carry an N-linked (GlcNAc...) asparagine glycan. 2 cysteine pairs are disulfide-bonded: C350–C410 and C411–C416. Residue N431 is glycosylated (N-linked (GlcNAc...) asparagine). 3 cysteine pairs are disulfide-bonded: C434–C445, C471–C526, and C486–C496. The interval 465 to 482 (HRRSLYCPDNPSIRPTSE) is leptin-binding. N-linked (GlcNAc...) asparagine glycans are attached at residues N514, N622, N657, N668, N686, N695, N698, and N726. 3 Fibronectin type-III domains span residues 537 to 632 (PPSN…TLVM), 637 to 729 (PMRG…NLTF), and 738 to 831 (AVQS…KDDI). Positions 620–624 (WSNWS) match the WSXWS motif motif. Residues 840–860 (LYVIVPIIISSCVLLLGTLLI) form a helical membrane-spanning segment. The Cytoplasmic portion of the chain corresponds to 861–1162 (SHQRMKKLFW…IENKMCDLTV (302 aa)). Residues 869–877 (FWDDVPNPK) carry the Box 1 motif motif. S880 is subject to Phosphoserine. Residues 891-896 (ETFEHL) are required for JAK2 activation. The interval 896–904 (LFTKHAESV) is required for STAT3 phosphorylation. Phosphotyrosine; by JAK2 is present on Y985. The residue at position 1077 (Y1077) is a Phosphotyrosine. Y1138 is modified (phosphotyrosine; by JAK2).

This sequence belongs to the type I cytokine receptor family. Type 2 subfamily. Present as a mixture of monomers and dimers. The phosphorylated receptor binds a number of SH2 domain-containing proteins such as JAK2, STAT3, PTPN11, and SOCS3. Interaction with SOCS3 inhibits JAK/STAT signaling and MAPK cascade. On ligand binding, phosphorylated on two conserved C-terminal tyrosine residues (isoform B only) by JAK2. Tyr-985 is required for complete binding and activation of PTPN11, ERK/FOS activation,for interaction with SOCS3 and SOCS3 mediated inhibition of leptin signaling. Phosphorylation on Tyr-1138 is required for STAT3 binding/activation. Phosphorylation of Tyr-1077 has a more accessory role. As to expression, isoform B is expressed in kidney, liver, lung, ovary, spleen and uterus. Increased level in uterus during gestation. Isoform A and isoform C are predominantly expressed in cerebral microvessels and choroid plexus, with lower levels in cortex, cerebellum and hypothalamus but also liver and lung. Isoform F is expressed at high levels in brain, liver and spleen and less in stomach, kidney, thymus, heart, lung and hypothalamus.

It localises to the cell membrane. It is found in the basolateral cell membrane. The protein localises to the secreted. Its function is as follows. Receptor for hormone LEP/leptin. On ligand binding, mediates LEP central and peripheral effects through the activation of different signaling pathways such as JAK2/STAT3 and MAPK cascade/FOS. In the hypothalamus, LEP acts as an appetite-regulating factor that induces a decrease in food intake and an increase in energy consumption by inducing anorexinogenic factors and suppressing orexigenic neuropeptides, also regulates bone mass and secretion of hypothalamo-pituitary-adrenal hormones. In the periphery, increases basal metabolism, influences reproductive function, regulates pancreatic beta-cell function and insulin secretion, is pro-angiogenic and affects innate and adaptive immunity. Control of energy homeostasis and melanocortin production (stimulation of POMC and full repression of AgRP transcription) is mediated by STAT3 signaling, whereas distinct signals regulate NPY and the control of fertility, growth and glucose homeostasis. Involved in the regulation of counter-regulatory response to hypoglycemia by inhibiting neurons of the parabrachial nucleus. Has a specific effect on T lymphocyte responses, differentially regulating the proliferation of naive and memory T-cells. Leptin increases Th1 and suppresses Th2 cytokine production. May transport LEP across the blood-brain barrier. Binds LEP and mediates LEP endocytosis. Does not induce phosphorylation of and activate STAT3. In terms of biological role, antagonizes Isoform A and isoform B-mediated LEP binding and endocytosis. The polypeptide is Leptin receptor (Lepr) (Rattus norvegicus (Rat)).